A 328-amino-acid chain; its full sequence is GMP reductase (328 aa).

Catalysis depends on cysteine 176, which acts as the Thioimidate intermediate. Position 205-228 (205-228) interacts with NADP(+); it reads IIADGGIRTHGDIAKSIRFGASMI.

This sequence belongs to the IMPDH/GMPR family. GuaC type 2 subfamily.

The enzyme catalyses IMP + NH4(+) + NADP(+) = GMP + NADPH + 2 H(+). In terms of biological role, catalyzes the irreversible NADPH-dependent deamination of GMP to IMP. It functions in the conversion of nucleobase, nucleoside and nucleotide derivatives of G to A nucleotides, and in maintaining the intracellular balance of A and G nucleotides. This is GMP reductase from Streptococcus pneumoniae serotype 4 (strain ATCC BAA-334 / TIGR4).